A 181-amino-acid chain; its full sequence is 6,7-dimethyl-8-ribityllumazine synthase (181 aa).

Residues phenylalanine 24, 62–64, and 86–88 each bind 5-amino-6-(D-ribitylamino)uracil; these read SFE and AII. 91-92 contacts (2S)-2-hydroxy-3-oxobutyl phosphate; sequence QT. The active-site Proton donor is histidine 94. 5-amino-6-(D-ribitylamino)uracil is bound at residue phenylalanine 119. Arginine 133 contacts (2S)-2-hydroxy-3-oxobutyl phosphate.

The protein belongs to the DMRL synthase family.

The enzyme catalyses (2S)-2-hydroxy-3-oxobutyl phosphate + 5-amino-6-(D-ribitylamino)uracil = 6,7-dimethyl-8-(1-D-ribityl)lumazine + phosphate + 2 H2O + H(+). It functions in the pathway cofactor biosynthesis; riboflavin biosynthesis; riboflavin from 2-hydroxy-3-oxobutyl phosphate and 5-amino-6-(D-ribitylamino)uracil: step 1/2. Catalyzes the formation of 6,7-dimethyl-8-ribityllumazine by condensation of 5-amino-6-(D-ribitylamino)uracil with 3,4-dihydroxy-2-butanone 4-phosphate. This is the penultimate step in the biosynthesis of riboflavin. This Microcystis aeruginosa (strain NIES-843 / IAM M-2473) protein is 6,7-dimethyl-8-ribityllumazine synthase.